Consider the following 465-residue polypeptide: Cystathionine beta-lyase (465 aa).

Lys-213 is modified (N6-(pyridoxal phosphate)lysine).

It belongs to the trans-sulfuration enzymes family. Pyridoxal 5'-phosphate is required as a cofactor.

It is found in the cytoplasm. The protein localises to the nucleus. The catalysed reaction is L,L-cystathionine + H2O = L-homocysteine + pyruvate + NH4(+). It carries out the reaction an S-substituted L-cysteine + H2O = a thiol + pyruvate + NH4(+). It participates in amino-acid biosynthesis; L-methionine biosynthesis via de novo pathway; L-homocysteine from L-cystathionine: step 1/1. The polypeptide is Cystathionine beta-lyase (STR3) (Saccharomyces cerevisiae (strain ATCC 204508 / S288c) (Baker's yeast)).